We begin with the raw amino-acid sequence, 256 residues long: Imidazole glycerol phosphate synthase subunit HisF (256 aa).

Active-site residues include Asp-11 and Asp-130.

It belongs to the HisA/HisF family. In terms of assembly, heterodimer of HisH and HisF.

Its subcellular location is the cytoplasm. The enzyme catalyses 5-[(5-phospho-1-deoxy-D-ribulos-1-ylimino)methylamino]-1-(5-phospho-beta-D-ribosyl)imidazole-4-carboxamide + L-glutamine = D-erythro-1-(imidazol-4-yl)glycerol 3-phosphate + 5-amino-1-(5-phospho-beta-D-ribosyl)imidazole-4-carboxamide + L-glutamate + H(+). The protein operates within amino-acid biosynthesis; L-histidine biosynthesis; L-histidine from 5-phospho-alpha-D-ribose 1-diphosphate: step 5/9. In terms of biological role, IGPS catalyzes the conversion of PRFAR and glutamine to IGP, AICAR and glutamate. The HisF subunit catalyzes the cyclization activity that produces IGP and AICAR from PRFAR using the ammonia provided by the HisH subunit. The sequence is that of Imidazole glycerol phosphate synthase subunit HisF from Cupriavidus necator (strain ATCC 17699 / DSM 428 / KCTC 22496 / NCIMB 10442 / H16 / Stanier 337) (Ralstonia eutropha).